A 208-amino-acid chain; its full sequence is Uracil phosphoribosyltransferase (208 aa).

5-phospho-alpha-D-ribose 1-diphosphate contacts are provided by residues Arg-78, Arg-103, and 130–138 (DPMLATGGS). Uracil contacts are provided by residues Ile-193 and 198-200 (GDA). 5-phospho-alpha-D-ribose 1-diphosphate is bound at residue Asp-199.

Belongs to the UPRTase family. The cofactor is Mg(2+).

It catalyses the reaction UMP + diphosphate = 5-phospho-alpha-D-ribose 1-diphosphate + uracil. It participates in pyrimidine metabolism; UMP biosynthesis via salvage pathway; UMP from uracil: step 1/1. Its activity is regulated as follows. Allosterically activated by GTP. In terms of biological role, catalyzes the conversion of uracil and 5-phospho-alpha-D-ribose 1-diphosphate (PRPP) to UMP and diphosphate. The sequence is that of Uracil phosphoribosyltransferase from Neisseria meningitidis serogroup A / serotype 4A (strain DSM 15465 / Z2491).